The sequence spans 87 residues: Small ribosomal subunit protein uS15 (87 aa).

It belongs to the universal ribosomal protein uS15 family. In terms of assembly, part of the 30S ribosomal subunit. Forms a bridge to the 50S subunit in the 70S ribosome, contacting the 23S rRNA.

Its function is as follows. One of the primary rRNA binding proteins, it binds directly to 16S rRNA where it helps nucleate assembly of the platform of the 30S subunit by binding and bridging several RNA helices of the 16S rRNA. Forms an intersubunit bridge (bridge B4) with the 23S rRNA of the 50S subunit in the ribosome. The protein is Small ribosomal subunit protein uS15 of Clostridium botulinum (strain Eklund 17B / Type B).